Consider the following 33-residue polypeptide: Cytochrome b6-f complex subunit 8 (33 aa).

Residues 2-22 (IFTLGWASLAAIFTFSIAMVV) form a helical membrane-spanning segment.

This sequence belongs to the PetN family. As to quaternary structure, the 4 large subunits of the cytochrome b6-f complex are cytochrome b6, subunit IV (17 kDa polypeptide, PetD), cytochrome f and the Rieske protein, while the 4 small subunits are PetG, PetL, PetM and PetN. The complex functions as a dimer.

It localises to the cellular thylakoid membrane. Its function is as follows. Component of the cytochrome b6-f complex, which mediates electron transfer between photosystem II (PSII) and photosystem I (PSI), cyclic electron flow around PSI, and state transitions. This chain is Cytochrome b6-f complex subunit 8, found in Prochlorococcus marinus (strain NATL2A).